The primary structure comprises 698 residues: Protein CRAC (698 aa).

The PH domain maps to 22–122 (DVSYSSIMKK…FLTLLIARIR (101 aa)). The tract at residues 594–630 (TGGGSVPSSQSTNNLQSSTSSMSSLSSSSTSTTKRSH) is disordered. Low complexity predominate over residues 601 to 626 (SSQSTNNLQSSTSSMSSLSSSSTSTT).

The protein localises to the cytoplasm. Couples activated G protein to adenylyl cyclase signal transduction from surface cAMP receptor. Pianissimo a cytosolic regulator and CRAC, are both essential for activation of the enzyme adenylyl cyclase. Pianissimo and CRAC do not function redundantly. Both proteins are integral components of the adenylyl cyclase activation pathway. The protein is Protein CRAC (dagA) of Dictyostelium discoideum (Social amoeba).